A 258-amino-acid polypeptide reads, in one-letter code: MNFPPIHPSTPKMTPPDLDPQKIPQHIAVIMDGNGRWATSRGLPRIAGHRQGARTLKELLRCCKDWGIKALTAYAFSTENWQRPIEEVDFLMLLFERLLRRELSQMHREGVRISFIGDLTALPKSLQTEMERSMTETLNNQAIHFTVAVNYGSRNEITRACRQVAELVQQGKLSADAVNEGIVEQHLYTTDTQPPDLLIRTSGEMRLSNFLLWQMAYTEMYFTDILWPDFDREAFHQALLSYQKRDRRFGQVKALISA.

Residues 1 to 18 show a composition bias toward pro residues; sequence MNFPPIHPSTPKMTPPDL. The interval 1 to 21 is disordered; that stretch reads MNFPPIHPSTPKMTPPDLDPQ. Aspartate 32 is a catalytic residue. Aspartate 32 contributes to the Mg(2+) binding site. Substrate-binding positions include 33 to 36, tryptophan 37, arginine 45, histidine 49, and 77 to 79; these read GNGR and STE. Asparagine 80 functions as the Proton acceptor in the catalytic mechanism. Residues tryptophan 81, arginine 83, arginine 200, and 206–208 contribute to the substrate site; that span reads RLS. Glutamate 219 is a binding site for Mg(2+).

Belongs to the UPP synthase family. In terms of assembly, homodimer. It depends on Mg(2+) as a cofactor.

In terms of biological role, catalyzes the condensation of isopentenyl diphosphate (IPP) with allylic pyrophosphates generating different type of terpenoids. This Nostoc sp. (strain PCC 7120 / SAG 25.82 / UTEX 2576) protein is Isoprenyl transferase 2.